Reading from the N-terminus, the 246-residue chain is B-cell receptor-associated protein 31 (246 aa).

At 2–6 (SLQWT) the chain is on the lumenal side. Residues 7–27 (AVATFLYAEVFVVLLLCIPFI) form a helical membrane-spanning segment. Over 28–43 (SPKRWQKIFKSRLVEL) the chain is Cytoplasmic. The helical transmembrane segment at 44 to 64 (LVSYGNTFFVVLIVILVLLVI) threads the bilayer. Residues 65-102 (DAVREIRKYDDVTEKVNLQNNPGAMEHFHMKLFRAQRN) lie on the Lumenal side of the membrane. The chain crosses the membrane as a helical span at residues 103–123 (LYIAGFSLLLSFLLRRLVTLI). At 124–246 (SQQATLLASN…VDGPMDKKEE (123 aa)) the chain is on the cytoplasmic side. Residues 165 to 237 (GGKLDVGNAE…EEHAKLQAAV (73 aa)) are a coiled coil. Positions 243-246 (KKEE) match the Di-lysine motif motif.

It belongs to the BCAP29/BCAP31 family. As to quaternary structure, homodimer and heterodimer with BCAP29. Binds CASP8 (isoform 9) as a complex containing BCAP31, BCAP29, BCL2 and/or BCL2L1. Forms a complex (via C-terminus) with TOMM40 which mediates the translocation of components of the mitochondrial membrane respiratory chain NADH dehydrogenase (Complex I) from the cytosol to the mitochondria; within the complex BCAP31 interacts directly with unprocessed and processed NDUFS4 and NDUFB11. Interacts with VDAC1. Interacts with VAMP3, VAMP1 and membrane IgD immunoglobulins. Interacts with HACD2. Interacts with DNM1L; may form part of a larger protein complex at the endoplasmic reticulum-mitochondrial interface during mitochondrial fission. (Microbial infection) Interacts (via C-terminus) with HRSV membrane protein SH; this interaction is direct. Post-translationally, cleaved by CASP8 and other caspases. In terms of tissue distribution, ubiquitous. Highly expressed in neurons and discrete endocrine cells.

It is found in the endoplasmic reticulum membrane. Its subcellular location is the endoplasmic reticulum-Golgi intermediate compartment membrane. Its function is as follows. Functions as a chaperone protein. Is one of the most abundant endoplasmic reticulum (ER) proteins. Plays a role in the export of secreted proteins in the ER, the recognition of abnormally folded protein and their targeting to the ER associated-degradation (ERAD). Also serves as a cargo receptor for the export of transmembrane proteins. Plays a role in the assembly of the mitochondrial membrane respiratory chain NADH dehydrogenase (Complex I) by stimulating the translocation of NDUFS4 and NDUFB11 from the cytosol to the mitochondria via interaction with TOMM40. In response to ER stress, delocalizes from the ER-mitochondria contact sites and binds BCL2. May be involved in CASP8-mediated apoptosis. This chain is B-cell receptor-associated protein 31, found in Homo sapiens (Human).